A 428-amino-acid polypeptide reads, in one-letter code: Enolase (428 aa).

Gln162 is a (2R)-2-phosphoglycerate binding site. The active-site Proton donor is Glu204. Mg(2+)-binding residues include Asp241, Glu283, and Asp310. 4 residues coordinate (2R)-2-phosphoglycerate: Lys335, Arg364, Ser365, and Lys386. Residue Lys335 is the Proton acceptor of the active site.

It belongs to the enolase family. The cofactor is Mg(2+).

The protein localises to the cytoplasm. It localises to the secreted. It is found in the cell surface. The catalysed reaction is (2R)-2-phosphoglycerate = phosphoenolpyruvate + H2O. The protein operates within carbohydrate degradation; glycolysis; pyruvate from D-glyceraldehyde 3-phosphate: step 4/5. Catalyzes the reversible conversion of 2-phosphoglycerate (2-PG) into phosphoenolpyruvate (PEP). It is essential for the degradation of carbohydrates via glycolysis. The protein is Enolase of Nocardia farcinica (strain IFM 10152).